We begin with the raw amino-acid sequence, 607 residues long: Fatty acid amide hydrolase (607 aa).

Catalysis depends on charge relay system residues Lys-205 and Ser-281. A substrate-binding site is contributed by 302 to 305 (GGGS). Residue Ser-305 is the Acyl-ester intermediate of the active site.

Belongs to the amidase family. Forms homodimers. As to expression, expressed in roots, leaves and flowers. Expressed in seedlings, flowers, roots, siliques, seeds and leaves.

Its subcellular location is the endoplasmic reticulum membrane. The protein localises to the cell membrane. It carries out the reaction N-(5Z,8Z,11Z,14Z-eicosatetraenoyl)-ethanolamine + H2O = ethanolamine + (5Z,8Z,11Z,14Z)-eicosatetraenoate. It catalyses the reaction N-(9Z,12Z-octadecadienoyl)-ethanolamine + H2O = ethanolamine + (9Z,12Z)-octadecadienoate. The catalysed reaction is N-hexadecanoylethanolamine + H2O = ethanolamine + hexadecanoate. The enzyme catalyses N-tetradecanoylethanolamine + H2O = tetradecanoate + ethanolamine. It carries out the reaction N-dodecanoylethanolamine + H2O = dodecanoate + ethanolamine. Its activity is regulated as follows. Inhibited by methyl arachidonyl fluorophosphonate (MAFP). Functionally, catalyzes the hydrolysis of bioactive endogenous fatty acid amides to their corresponding acids. The hydrolysis of endogenous amidated lipids terminates their participation as lipid mediators in various signaling systems. Converts a wide range of N-acylethanolamines (NAEs) to their corresponding free fatty acids and ethanolamine. Can use oleamide as substrate, but not indole-3-acetamide, 1-naphtalene-acetamide, nicotinic acid amide or L-asparagine. Can use 2-arachidonylglycerol as substrate. Participates in the regulation of plant growth. Hydrolyzes N-dodecanoylethanolamine, which is has a growth inhibitory effect on seedling growth. Involved in plant defense signaling. Involved in abscisic acid (ABA) signaling through mechanisms that are independent of the catalytic activity. Involved in the regulation of flowering time. Catalyzes the hydrolysis of N-acyl L-homoserine lactones (AHLs), which are a class of signaling molecules produced by bacteria for quorum sensing. Accumulation of L-homoserine appears to encourage plant growth at low concentrations by stimulating transpiration, but higher concentrations inhibit growth by stimulating ethylene production. The protein is Fatty acid amide hydrolase of Arabidopsis thaliana (Mouse-ear cress).